Consider the following 118-residue polypeptide: MRLYELVLIVRPELSSTEIDKLTDELTSIISNYEGKLVKHEYWGMRSLAYKINRNQRAHYIMLAISANNNILQKLKNKIKNNLEIIRSRFIKVKEISQTTSPILKNQSLEQTAIDVTS.

This sequence belongs to the bacterial ribosomal protein bS6 family.

Functionally, binds together with bS18 to 16S ribosomal RNA. This chain is Small ribosomal subunit protein bS6, found in Orientia tsutsugamushi (strain Ikeda) (Rickettsia tsutsugamushi).